Consider the following 184-residue polypeptide: Photosystem I assembly protein Ycf4 (184 aa).

2 helical membrane-spanning segments follow: residues 22–42 (FFWA…GTSS) and 57–77 (ISFF…LFIS).

It belongs to the Ycf4 family.

The protein localises to the plastid. It is found in the chloroplast thylakoid membrane. Functionally, seems to be required for the assembly of the photosystem I complex. This is Photosystem I assembly protein Ycf4 from Lemna minor (Common duckweed).